A 262-amino-acid polypeptide reads, in one-letter code: Troponin T, slow skeletal muscle (262 aa).

Residues 1–31 (MSDTEEQEYEEEQAEDEEAVEEEEAPEEPEP) are compositionally biased toward acidic residues. Disordered regions lie at residues 1 to 62 (MSDT…ERVD) and 109 to 153 (ERAE…KKKV). Phosphoserine; by CK2 is present on serine 2. A compositionally biased stretch (basic and acidic residues) spans 32 to 41 (VAEREEERPK). Residues 43–55 (SRPVVPPLIPPKI) show a composition bias toward pro residues. Over residues 109-149 (ERAEQQRFRTEKERERQAKLAEEKMRKEEEEAKKRAEDDAK) the composition is skewed to basic and acidic residues.

The protein belongs to the troponin T family. In terms of assembly, interacts with TPM3. In terms of tissue distribution, expressed in adult soleus muscle.

Functionally, troponin T is the tropomyosin-binding subunit of troponin, the thin filament regulatory complex which confers calcium-sensitivity to striated muscle actomyosin ATPase activity. This chain is Troponin T, slow skeletal muscle (Tnnt1), found in Mus musculus (Mouse).